Here is a 453-residue protein sequence, read N- to C-terminus: tRNA modification GTPase MnmE (453 aa).

R22, E79, and K119 together coordinate (6S)-5-formyl-5,6,7,8-tetrahydrofolate. Residues 215 to 376 form the TrmE-type G domain; that stretch reads GMKVVIAGRP…LKLHLKSLMG (162 aa). N225 contributes to the K(+) binding site. GTP contacts are provided by residues 225–230, 244–250, 269–272, and 334–337; these read NAGKSS, TEIAGTT, DTAG, and NKAD. Position 229 (S229) interacts with Mg(2+). T244, I246, and T249 together coordinate K(+). Residue T250 coordinates Mg(2+). K453 is a binding site for (6S)-5-formyl-5,6,7,8-tetrahydrofolate.

This sequence belongs to the TRAFAC class TrmE-Era-EngA-EngB-Septin-like GTPase superfamily. TrmE GTPase family. In terms of assembly, homodimer. Heterotetramer of two MnmE and two MnmG subunits. The cofactor is K(+).

It localises to the cytoplasm. In terms of biological role, exhibits a very high intrinsic GTPase hydrolysis rate. Involved in the addition of a carboxymethylaminomethyl (cmnm) group at the wobble position (U34) of certain tRNAs, forming tRNA-cmnm(5)s(2)U34. This is tRNA modification GTPase MnmE from Shewanella putrefaciens (strain CN-32 / ATCC BAA-453).